A 167-amino-acid chain; its full sequence is NADH-quinone oxidoreductase subunit I (167 aa).

2 consecutive 4Fe-4S ferredoxin-type domains span residues 59-88 (RKYK…IEAQ) and 98-127 (VRYD…EGPN). [4Fe-4S] cluster is bound by residues Cys68, Cys71, Cys74, Cys78, Cys107, Cys110, Cys113, and Cys117.

It belongs to the complex I 23 kDa subunit family. As to quaternary structure, NDH-1 is composed of 14 different subunits. Subunits NuoA, H, J, K, L, M, N constitute the membrane sector of the complex. It depends on [4Fe-4S] cluster as a cofactor.

Its subcellular location is the cell inner membrane. The catalysed reaction is a quinone + NADH + 5 H(+)(in) = a quinol + NAD(+) + 4 H(+)(out). Its function is as follows. NDH-1 shuttles electrons from NADH, via FMN and iron-sulfur (Fe-S) centers, to quinones in the respiratory chain. The immediate electron acceptor for the enzyme in this species is believed to be ubiquinone. Couples the redox reaction to proton translocation (for every two electrons transferred, four hydrogen ions are translocated across the cytoplasmic membrane), and thus conserves the redox energy in a proton gradient. The polypeptide is NADH-quinone oxidoreductase subunit I (Ehrlichia canis (strain Jake)).